Reading from the N-terminus, the 341-residue chain is MDIEAFDYHLPEALIAQTPLKNRDESRLLILGRQSGYIEHKHFKDVTDYLNEGDTLVLNDTRVMPARLFGMKEETGAKVEMLMLTQIEGNDWEVLLKPAKRIKVGNKLTFGEGKIIAECIEELDQGGRIMRLHYDGILQERLDELGEMPLPPYIKERLDDQERYQTVYAKASGSAAAPTAGLHFTDELLERIKAQGVNIAFITLHVGLGTFRPVSVDNIDDHEMHSEYYQMDEATANLLNSTRDNGNRIISVGTTSTRTLETIMQSSDRFVAKSGWTDIFIFPGFNFKAIDGLITNFHLPKSTLVMLVSAFSSRDYIINAYNQAVASEYRFFSFGDAMLII.

Belongs to the QueA family. Monomer.

It localises to the cytoplasm. It carries out the reaction 7-aminomethyl-7-carbaguanosine(34) in tRNA + S-adenosyl-L-methionine = epoxyqueuosine(34) in tRNA + adenine + L-methionine + 2 H(+). It functions in the pathway tRNA modification; tRNA-queuosine biosynthesis. In terms of biological role, transfers and isomerizes the ribose moiety from AdoMet to the 7-aminomethyl group of 7-deazaguanine (preQ1-tRNA) to give epoxyqueuosine (oQ-tRNA). This is S-adenosylmethionine:tRNA ribosyltransferase-isomerase from Staphylococcus saprophyticus subsp. saprophyticus (strain ATCC 15305 / DSM 20229 / NCIMB 8711 / NCTC 7292 / S-41).